The chain runs to 362 residues: Peptide chain release factor 1 (362 aa).

Q235 carries the post-translational modification N5-methylglutamine.

Belongs to the prokaryotic/mitochondrial release factor family. Methylated by PrmC. Methylation increases the termination efficiency of RF1.

The protein localises to the cytoplasm. Its function is as follows. Peptide chain release factor 1 directs the termination of translation in response to the peptide chain termination codons UAG and UAA. The protein is Peptide chain release factor 1 of Acinetobacter baylyi (strain ATCC 33305 / BD413 / ADP1).